The sequence spans 881 residues: Mechanosensitive ion channel protein 5 (881 aa).

Basic and acidic residues-rich tracts occupy residues 1 to 12 (MAAVDSTDRRDF) and 48 to 59 (DGEKGKNDKKGD). The disordered stretch occupies residues 1–248 (MAAVDSTDRR…RNGFEEEEEE (248 aa)). Residues 115 to 145 (ELQSNTPPRPATASNTPRRGLTTISESSSPV) are compositionally biased toward polar residues. Positions 169 to 179 (EEGRNRDEAEV) are enriched in basic and acidic residues. Residue serine 231 is modified to Phosphoserine. Transmembrane regions (helical) follow at residues 265 to 285 (LSFW…SLVC), 309 to 329 (VLVL…IVFL), 349 to 369 (KSVQ…FLFD), 387 to 407 (VLVC…LVKV), 642 to 662 (IINV…LGIA), and 677 to 697 (VAFV…FLFV). The interval 861–881 (PTANPTSSDRIPPSWMQQRGP) is disordered. The segment covering 864–881 (NPTSSDRIPPSWMQQRGP) has biased composition (polar residues).

The protein belongs to the MscS (TC 1.A.23) family.

Its subcellular location is the membrane. Mechanosensitive channel that opens in response to stretch forces in the membrane lipid bilayer. The polypeptide is Mechanosensitive ion channel protein 5 (MSL5) (Arabidopsis thaliana (Mouse-ear cress)).